A 1058-amino-acid polypeptide reads, in one-letter code: Carbamoyl phosphate synthase pyrimidine-specific large chain (1058 aa).

The interval 1 to 401 (MPKRTDIHKI…ATLKAVRSLE (401 aa)) is carboxyphosphate synthetic domain. The ATP site is built by Arg129, Arg169, Gly175, Gly176, Gln208, Ile210, Glu215, Gly241, Ile242, His243, Gln284, and Glu298. The region spanning 133–327 (KALMEELGEP…IAKMAAKIAV (195 aa)) is the ATP-grasp 1 domain. Positions 284, 298, and 300 each coordinate Mg(2+). Gln284, Glu298, and Asn300 together coordinate Mn(2+). The interval 402–546 (IGVHHVEEPA…YGTYEFENES (145 aa)) is oligomerization domain. Positions 547 to 929 (IVTKRPSVLV…ALYKAFEAAK (383 aa)) are carbamoyl phosphate synthetic domain. The 191-residue stretch at 671–861 (DKVIKALAIP…MAQVATRAIL (191 aa)) folds into the ATP-grasp 2 domain. Positions 707, 746, 748, 752, 777, 778, 779, 780, 820, and 832 each coordinate ATP. 3 residues coordinate Mg(2+): Gln820, Glu832, and Asn834. Residues Gln820, Glu832, and Asn834 each contribute to the Mn(2+) site. The region spanning 930–1058 (LHVPSHGNVL…ESQSFVTQAL (129 aa)) is the MGS-like domain. An allosteric domain region spans residues 930–1058 (LHVPSHGNVL…ESQSFVTQAL (129 aa)).

Belongs to the CarB family. As to quaternary structure, composed of two chains; the small (or glutamine) chain promotes the hydrolysis of glutamine to ammonia, which is used by the large (or ammonia) chain to synthesize carbamoyl phosphate. Tetramer of heterodimers (alpha,beta)4. Mg(2+) serves as cofactor. It depends on Mn(2+) as a cofactor.

The catalysed reaction is hydrogencarbonate + L-glutamine + 2 ATP + H2O = carbamoyl phosphate + L-glutamate + 2 ADP + phosphate + 2 H(+). It carries out the reaction hydrogencarbonate + NH4(+) + 2 ATP = carbamoyl phosphate + 2 ADP + phosphate + 2 H(+). It participates in amino-acid biosynthesis; L-arginine biosynthesis; carbamoyl phosphate from bicarbonate: step 1/1. It functions in the pathway pyrimidine metabolism; UMP biosynthesis via de novo pathway; (S)-dihydroorotate from bicarbonate: step 1/3. Its function is as follows. Small subunit of the glutamine-dependent carbamoyl phosphate synthetase (CPSase). CPSase catalyzes the formation of carbamoyl phosphate from the ammonia moiety of glutamine, carbonate, and phosphate donated by ATP, constituting the first step of the biosynthetic pathway leading to pyrimidine nucleotides. The large subunit (synthetase) binds the substrates ammonia (free or transferred from glutamine from the small subunit), hydrogencarbonate and ATP and carries out an ATP-coupled ligase reaction, activating hydrogencarbonate by forming carboxy phosphate which reacts with ammonia to form carbamoyl phosphate. This chain is Carbamoyl phosphate synthase pyrimidine-specific large chain (pyrAB), found in Lactiplantibacillus plantarum (strain ATCC BAA-793 / NCIMB 8826 / WCFS1) (Lactobacillus plantarum).